Here is a 552-residue protein sequence, read N- to C-terminus: Steroid transmembrane transporter SLC22A24 (552 aa).

Transmembrane regions (helical) follow at residues 16–36 (FQIL…PHML), 144–164 (LISV…LIFG), 178–198 (CCLL…TFPV), 204–224 (FLGG…MSEW), 235–255 (GIIL…GFVI), 267–287 (IPLF…QWLI), 350–370 (IFYL…LMLN), 378–398 (IFLF…AVLL), 407–427 (ISQM…IFLS), 435–455 (VALA…HTVH), 469–489 (IGLN…LMIL), and 496–516 (LPWI…LLLP). Residues 524 to 552 (PNTIQDVENNRRDSRKTKQEDISMKVTQF) are disordered. A compositionally biased stretch (basic and acidic residues) spans 531–546 (ENNRRDSRKTKQEDIS).

The protein belongs to the major facilitator (TC 2.A.1) superfamily. Organic cation transporter (TC 2.A.1.19) family.

It localises to the cell membrane. It carries out the reaction estrone 3-sulfate(out) + glutarate(in) = estrone 3-sulfate(in) + glutarate(out). It catalyses the reaction 17beta-estradiol 17-O-(beta-D-glucuronate)(out) + glutarate(in) = 17beta-estradiol 17-O-(beta-D-glucuronate)(in) + glutarate(out). The enzyme catalyses taurocholate(out) + glutarate(in) = taurocholate(in) + glutarate(out). The catalysed reaction is glycocholate(out) + glutarate(in) = glycocholate(in) + glutarate(out). It carries out the reaction dehydroepiandrosterone 3-sulfate(out) + glutarate(in) = dehydroepiandrosterone 3-sulfate(in) + glutarate(out). It catalyses the reaction glutarate(in) + succinate(out) = glutarate(out) + succinate(in). In terms of biological role, renal transmembrane organic anion/dicarboxylate exchanger that participates in the reabsorption of conjugated steroids, as well as bile acids, driven by an outward gradient of dicarboxylates such as glutarate or succinate. Transports taurocholate, estrone 3-sulfate, and estradiol-17-glucuronide (17beta-estradiol 17-O-(beta-D-glucuronate)), but not androstanediol glucuronide (5alpha-androstane-3alpha,17beta-diol 3-O-(beta-D-glucuronate)). This is Steroid transmembrane transporter SLC22A24 from Equus caballus (Horse).